We begin with the raw amino-acid sequence, 601 residues long: Bifunctional ribose 1,5-bisphosphokinase-thymidine phosphorylase (601 aa).

Residues 1-177 (MKATGTFFFV…EAGTARFVEA (177 aa)) form a ribose 1,5-bisphosphokinase region. The interval 178–601 (LRTGTRTSAA…CCQAVRIDPD (424 aa)) is thymidinephosphorylase.

This sequence in the N-terminal section; belongs to the ribose 1,5-bisphosphokinase family. It in the C-terminal section; belongs to the thymidine/pyrimidine-nucleoside phosphorylase family. Type 2 subfamily.

It carries out the reaction alpha-D-ribose 1,5-bisphosphate + ATP = 5-phospho-alpha-D-ribose 1-diphosphate + ADP. The enzyme catalyses thymidine + phosphate = 2-deoxy-alpha-D-ribose 1-phosphate + thymine. Its pathway is metabolic intermediate biosynthesis; 5-phospho-alpha-D-ribose 1-diphosphate biosynthesis; 5-phospho-alpha-D-ribose 1-diphosphate from D-ribose 5-phosphate (route II): step 3/3. Catalyzes the phosphorylation of ribose 1,5-bisphosphate to 5-phospho-D-ribosyl alpha-1-diphosphate (PRPP). This chain is Bifunctional ribose 1,5-bisphosphokinase-thymidine phosphorylase (phnN), found in Cupriavidus necator (strain ATCC 17699 / DSM 428 / KCTC 22496 / NCIMB 10442 / H16 / Stanier 337) (Ralstonia eutropha).